Here is a 1181-residue protein sequence, read N- to C-terminus: C5a peptidase (1181 aa).

Residues 1–31 (MRKKQKLPFDKLAIALMSTSILLNAQSDIKA) form the signal peptide. Over residues 33–52 (TVTEDTPATEQAVETPQPTA) the composition is skewed to polar residues. The interval 33 to 117 (TVTEDTPATE…PSQVKTLQEK (85 aa)) is disordered. Acidic residues predominate over residues 70–81 (DDAEETIADDAN). In terms of domain architecture, Peptidase S8 spans 99 to 581 (KATIRDLNDP…AGAVDAKKAS (483 aa)). Residues aspartate 130, histidine 193, and serine 512 each act as charge relay system in the active site. 4 stretches are compositionally biased toward basic and acidic residues: residues 1029-1054 (EGHS…KPEQ), 1061-1071 (PDKKPETKPEQ), 1078-1088 (PDKKPETKPEQ), and 1095-1107 (PDKK…EKDS). A disordered region spans residues 1029 to 1150 (EGHSNKPEQD…KDQLPTTNDK (122 aa)). 5 tandem repeats follow at residues 1034–1050 (KPEQ…KPET), 1051–1067 (KPEQ…KPET), 1068–1084 (KPEQ…KPET), 1085–1101 (KPEQ…KPET), and 1102–1118 (KPEK…TPQK). A 5 X 17 AA tandem repeats region spans residues 1034-1118 (KPEQDGSDQA…GQTPGKTPQK (85 aa)). 2 stretches are compositionally biased toward polar residues: residues 1109-1123 (GQTP…QPSR) and 1137-1147 (KASTKDQLPTT). The LPXTG sorting signal signature appears at 1144–1148 (LPTTN). Pentaglycyl murein peptidoglycan amidated threonine is present on threonine 1147. The propeptide at 1148 to 1181 (NDKDTNRLHLLKLVMTTFFLGLVAHIFKTKRTED) is removed by sortase.

The protein belongs to the peptidase S8 family. In terms of processing, cleaved by SpeB protease; leading to its degradation. Degradation by SpeB is probably strictly regulated to preserve integrity of C5a peptidase.

Its subcellular location is the secreted. It localises to the cell wall. It catalyses the reaction The primary cleavage site is at 67-His-|-Lys-68 in human C5a with a minor secondary cleavage site at 58-Ala-|-Ser-59.. Functionally, this virulence factor of S.pyogenes specifically cleaves the human serum chemotaxin C5a at '68-Lys-|-Asp-69' bond near its C-terminus, destroying its ability to serve as a chemoattractant. This chain is C5a peptidase (scpA), found in Streptococcus pyogenes serotype M1.